The sequence spans 284 residues: Ubiquinone biosynthesis protein COQ4, mitochondrial (284 aa).

Zn(2+) is bound by residues H165, D166, H169, and E181.

This sequence belongs to the COQ4 family. As to quaternary structure, component of a multi-subunit COQ enzyme complex, composed of at least COQ3, COQ4, COQ5, COQ6, COQ7 and COQ9. Zn(2+) serves as cofactor.

The protein resides in the mitochondrion inner membrane. The catalysed reaction is a 4-hydroxy-3-methoxy-5-(all-trans-polyprenyl)benzoate + H(+) = a 2-methoxy-6-(all-trans-polyprenyl)phenol + CO2. The protein operates within cofactor biosynthesis; ubiquinone biosynthesis. In terms of biological role, lyase that catalyzes the C1-decarboxylation of 4-hydroxy-3-methoxy-5-(all-trans-polyprenyl)benzoic acid into 2-methoxy-6-(all-trans-polyprenyl)phenol during ubiquinone biosynthesis. The sequence is that of Ubiquinone biosynthesis protein COQ4, mitochondrial from Ajellomyces dermatitidis (strain ER-3 / ATCC MYA-2586) (Blastomyces dermatitidis).